Reading from the N-terminus, the 397-residue chain is 2-isopropylmalate synthase 1 (397 aa).

The region spanning 6–268 (VIVFDTTLRD…VHGINTKEIY (263 aa)) is the Pyruvate carboxyltransferase domain. D15, H203, H205, and N239 together coordinate Mn(2+).

This sequence belongs to the alpha-IPM synthase/homocitrate synthase family. LeuA type 1 subfamily. As to quaternary structure, homodimer. The cofactor is Mn(2+).

The protein localises to the cytoplasm. The catalysed reaction is 3-methyl-2-oxobutanoate + acetyl-CoA + H2O = (2S)-2-isopropylmalate + CoA + H(+). Its pathway is amino-acid biosynthesis; L-leucine biosynthesis; L-leucine from 3-methyl-2-oxobutanoate: step 1/4. Catalyzes the condensation of the acetyl group of acetyl-CoA with 3-methyl-2-oxobutanoate (2-ketoisovalerate) to form 3-carboxy-3-hydroxy-4-methylpentanoate (2-isopropylmalate). The protein is 2-isopropylmalate synthase 1 of Caldanaerobacter subterraneus subsp. tengcongensis (strain DSM 15242 / JCM 11007 / NBRC 100824 / MB4) (Thermoanaerobacter tengcongensis).